A 501-amino-acid chain; its full sequence is Putative lon protease homolog (501 aa).

Residue 53–60 (GPPGIGKS) participates in ATP binding. Residues 481–494 (SSSQRMSQHGYSSE) are compositionally biased toward polar residues. The tract at residues 481–501 (SSSQRMSQHGYSSENIDRSYM) is disordered.

The protein belongs to the peptidase S16 family.

This Methanothermobacter thermautotrophicus (strain ATCC 29096 / DSM 1053 / JCM 10044 / NBRC 100330 / Delta H) (Methanobacterium thermoautotrophicum) protein is Putative lon protease homolog.